Consider the following 878-residue polypeptide: Indoleacetate decarboxylase (878 aa).

The PFL domain maps to 42–750; the sequence is DRTKRMKERF…VTGATPDGRL (709 aa). Catalysis depends on C500, which acts as the Cysteine radical intermediate. E502 serves as the catalytic Proton acceptor. A Glycine radical domain is found at 758-878; it reads GILSASPGTD…VIARTEYDAL (121 aa). G853 carries the glycine radical modification.

Belongs to the glycyl radical enzyme (GRE) family. As to quaternary structure, homodimer (predominantly) and monomer. Requires the activating protein OsIADAE to generate the key active site glycyl radical on Gly-853 that is involved in catalysis.

It carries out the reaction (indol-3-yl)acetate + H(+) = skatole + CO2. The protein operates within amino-acid degradation. Glycyl radical enzyme that catalyzes the terminal step of tryptophan fermentation, the decarboxylation of indoleacetate to form skatole, a malodorous compound that contributes to the characteristic smell of animal feces. No activity is detected with phenylacetate or p-hydroxyphenylacetate as substrates, indicating high substrate specificity. The sequence is that of Indoleacetate decarboxylase from Tractidigestivibacter scatoligenes (Olsenella scatoligenes).